The primary structure comprises 340 residues: DNA-directed RNA polymerase subunit alpha (340 aa).

The segment at 1 to 236 (MLSLSKNWNT…EQLQLFISFE (236 aa)) is alpha N-terminal domain (alpha-NTD). The interval 251–340 (FSPYLLKRVD…LSKRYEDSYN (90 aa)) is alpha C-terminal domain (alpha-CTD).

Belongs to the RNA polymerase alpha chain family. Homodimer. The RNAP catalytic core consists of 2 alpha, 1 beta, 1 beta' and 1 omega subunit. When a sigma factor is associated with the core the holoenzyme is formed, which can initiate transcription.

It catalyses the reaction RNA(n) + a ribonucleoside 5'-triphosphate = RNA(n+1) + diphosphate. In terms of biological role, DNA-dependent RNA polymerase catalyzes the transcription of DNA into RNA using the four ribonucleoside triphosphates as substrates. The polypeptide is DNA-directed RNA polymerase subunit alpha (Rickettsia conorii (strain ATCC VR-613 / Malish 7)).